Here is an 837-residue protein sequence, read N- to C-terminus: Protein translocase subunit SecA 1 (837 aa).

ATP contacts are provided by residues Q85, 103-107, and D492; that span reads GEGKT. The span at 787–806 shows a compositional bias: basic and acidic residues; it reads QEVAKGEAVHPKEDGEEPKR. Residues 787 to 811 are disordered; the sequence is QEVAKGEAVHPKEDGEEPKRKPVRK. Zn(2+) is bound by residues C821, C823, C832, and C833.

The protein belongs to the SecA family. Monomer and homodimer. Part of the essential Sec protein translocation apparatus which comprises SecA, SecYEG and auxiliary proteins SecDF. Other proteins may also be involved. Zn(2+) is required as a cofactor.

The protein resides in the cell membrane. It is found in the cytoplasm. It carries out the reaction ATP + H2O + cellular proteinSide 1 = ADP + phosphate + cellular proteinSide 2.. Functionally, part of the Sec protein translocase complex. Interacts with the SecYEG preprotein conducting channel. Has a central role in coupling the hydrolysis of ATP to the transfer of proteins into and across the cell membrane, serving as an ATP-driven molecular motor driving the stepwise translocation of polypeptide chains across the membrane. The protein is Protein translocase subunit SecA 1 of Geobacillus kaustophilus (strain HTA426).